Here is a 296-residue protein sequence, read N- to C-terminus: Probable porphobilinogen deaminase (296 aa).

Cys-241 carries the post-translational modification S-(dipyrrolylmethanemethyl)cysteine.

This sequence belongs to the HMBS family. Dipyrromethane serves as cofactor.

It carries out the reaction 4 porphobilinogen + H2O = hydroxymethylbilane + 4 NH4(+). It participates in porphyrin-containing compound metabolism; protoporphyrin-IX biosynthesis; coproporphyrinogen-III from 5-aminolevulinate: step 2/4. Its function is as follows. Tetrapolymerization of the monopyrrole PBG into the hydroxymethylbilane pre-uroporphyrinogen in several discrete steps. This Pyrobaculum calidifontis (strain DSM 21063 / JCM 11548 / VA1) protein is Probable porphobilinogen deaminase.